We begin with the raw amino-acid sequence, 916 residues long: Nonsense-mediated mRNA decay factor SMG8 (916 aa).

Positions 566 to 626 (LENSNRTPDT…KNYASQGDAD (61 aa)) are disordered. The segment covering 589–604 (LSGSQKSQDSASNLTF) has biased composition (polar residues).

The protein belongs to the SMG8 family.

Its function is as follows. Involved in nonsense-mediated decay (NMD) of mRNAs containing premature stop codons. Probable component of kinase complex containing SMG1 and recruited to stalled ribosomes. The polypeptide is Nonsense-mediated mRNA decay factor SMG8 (Aedes aegypti (Yellowfever mosquito)).